A 436-amino-acid chain; its full sequence is 4-hydroxyphenylpyruvate dioxygenase (436 aa).

2 consecutive VOC domains span residues 38–194 (RFHH…GFEV) and 210–370 (RLDH…IFTK). Residues histidine 213, histidine 295, and glutamate 381 each contribute to the Fe cation site.

It belongs to the 4HPPD family. It depends on Fe cation as a cofactor.

The protein localises to the cytoplasm. It catalyses the reaction 3-(4-hydroxyphenyl)pyruvate + O2 = homogentisate + CO2. The protein operates within amino-acid degradation; L-phenylalanine degradation; acetoacetate and fumarate from L-phenylalanine: step 3/6. It functions in the pathway cofactor biosynthesis; prenylquinone biosynthesis. This Plectranthus scutellarioides (Coleus) protein is 4-hydroxyphenylpyruvate dioxygenase.